A 422-amino-acid polypeptide reads, in one-letter code: Transcription termination factor Rho 1 (422 aa).

The Rho RNA-BD domain occupies 49 to 124 (AAIGGGVVEI…VKAHSINFTD (76 aa)). Residues 173 to 178 (GKGQRA), 185 to 190 (RAGKTI), and arginine 216 contribute to the ATP site.

It belongs to the Rho family. Homohexamer. The homohexamer assembles into an open ring structure.

Its function is as follows. Facilitates transcription termination by a mechanism that involves Rho binding to the nascent RNA, activation of Rho's RNA-dependent ATPase activity, and release of the mRNA from the DNA template. This is Transcription termination factor Rho 1 from Ehrlichia chaffeensis (strain ATCC CRL-10679 / Arkansas).